Reading from the N-terminus, the 505-residue chain is Trans-cinnamate 4-monooxygenase (505 aa).

The chain crosses the membrane as a helical span at residues 3-23 (LLLLEKTLLALFLAAITAITI). (E)-cinnamate is bound by residues 213–218 (RSRLAQ) and Ala-306. Cys-447 is a heme binding site.

The protein belongs to the cytochrome P450 family. The cofactor is heme.

The protein resides in the membrane. It carries out the reaction (E)-cinnamate + reduced [NADPH--hemoprotein reductase] + O2 = (E)-4-coumarate + oxidized [NADPH--hemoprotein reductase] + H2O + H(+). It participates in phenylpropanoid metabolism; trans-4-coumarate biosynthesis; trans-4-coumarate from trans-cinnamate: step 1/1. Catalyzes the first oxidative step of the phenylpropanoid pathway in higher plants by transforming trans-cinnamate into p-coumarate. The compounds formed by this pathway are essential components for lignification, pollination, and defense against ultraviolet light, predators and pathogens. This Pisum sativum (Garden pea) protein is Trans-cinnamate 4-monooxygenase (CYP73A9).